Consider the following 334-residue polypeptide: MPEPVKVLVTGAAGQIAYSLLFGIAKGDVFGKDQPLILVLLDITPMMTVLEGVVMELQDCALPLLKEVIATDKEDVAFKDLDVAILVGSMPRREGMERKDLLKANVKIFKSQGAALNKYSKKSVKVIVVGNPANTNCLTALKSAPSIPKENFSCLTRLDHNRAKAQIALKLNVASDDVKNVIIWGNHSSTQYPDASHASVTLQGKDVGAFEAVKNDDWLKGGFITTVQQRGAAVIKARKLSSAMSAAKAICDHVRDIWFGTPEGQFVSMGVISDGNSYGVPEDLMYSFPLTIKNKTWKIVEGLCINDFSREKMDITAKELQDEKETAFEFLSSE.

An NAD(+)-binding site is contributed by Gly11 to Ala17. 2 residues coordinate substrate: Arg92 and Arg98. Residues Asn105, Gln112, and Val129 to Asn131 contribute to the NAD(+) site. Residues Asn131 and Arg162 each contribute to the substrate site. Catalysis depends on His187, which acts as the Proton acceptor.

It belongs to the LDH/MDH superfamily. MDH type 2 family. In terms of assembly, homodimer.

It is found in the cytoplasm. The protein resides in the cytosol. The catalysed reaction is (S)-malate + NAD(+) = oxaloacetate + NADH + H(+). It carries out the reaction (S)-2-hydroxyglutarate + NAD(+) = 2-oxoglutarate + NADH + H(+). In terms of biological role, catalyzes the reduction of aromatic alpha-keto acids in the presence of NADH. Plays essential roles in the malate-aspartate shuttle and the tricarboxylic acid cycle, important in mitochondrial NADH supply for oxidative phosphorylation. Catalyzes the reduction of 2-oxoglutarate to 2-hydroxyglutarate, leading to elevated reactive oxygen species (ROS). The protein is Malate dehydrogenase, cytoplasmic (mdh1) of Xenopus laevis (African clawed frog).